We begin with the raw amino-acid sequence, 510 residues long: Protein PLASTID TRANSCRIPTIONALLY ACTIVE 16, chloroplastic (510 aa).

A compositionally biased stretch (polar residues) spans 1–14 (MASSSTSFPLTTAP). The transit peptide at 1-19 (MASSSTSFPLTTAPPQGVR) directs the protein to the chloroplast. Disordered stretches follow at residues 1–24 (MASSSTSFPLTTAPPQGVRFNRRK) and 38–58 (LGKTKGDDDSEGKQKGKNPFQ). Residues 41-51 (TKGDDDSEGKQ) are compositionally biased toward basic and acidic residues. Position 94-123 (94-123 (IFVAGATGQAGIRIAQTLLQRGFSVRAGVP)) interacts with NADP(+). Residues 354–403 (ARERAEEEAKVAADKAREAAEAAKEFEKQMQKLSEKEAEAASLAEDAQQK) adopt a coiled-coil conformation. Serine 395 bears the Phosphoserine mark. The residue at position 451 (threonine 451) is a Phosphothreonine; by STN7. Positions 453-493 (RGQAKARNLPPKKAVVKQRPSSPFASKPKEERPKKPEKEVR) are disordered. Over residues 479 to 493 (KPKEERPKKPEKEVR) the composition is skewed to basic and acidic residues.

Belongs to the NAD(P)-dependent epimerase/dehydratase family. As to quaternary structure, component of the plastid transcriptionally active chromosome required for plastid gene expression. Interacts with DEGP1 under high light conditions and maybe its degradation target. Post-translationally, excluded from chloroplast nucleoid when phosphorylated on Thr-451 by STN7 that may regulate membrane-anchoring functions of the nucleoid.

It is found in the plastid. The protein resides in the chloroplast stroma. Its subcellular location is the chloroplast nucleoid. The protein localises to the chloroplast thylakoid membrane. Its function is as follows. Probably involved in the regulation of plastid gene expression. In Arabidopsis thaliana (Mouse-ear cress), this protein is Protein PLASTID TRANSCRIPTIONALLY ACTIVE 16, chloroplastic.